We begin with the raw amino-acid sequence, 268 residues long: Myb-related protein 315 (268 aa).

HTH myb-type domains follow at residues 9-61 (KFGL…MNYL) and 62-116 (RPDL…KKKL). 2 consecutive DNA-binding regions (H-T-H motif) follow at residues 37 to 61 (WRVI…MNYL) and 89 to 112 (WSKI…NTHI).

As to expression, expressed in roots, stems, leaves, seed pods and flowers. Strongest expression in the stem.

The protein localises to the nucleus. Functionally, transcription factor. The sequence is that of Myb-related protein 315 from Antirrhinum majus (Garden snapdragon).